The following is a 64-amino-acid chain: Large ribosomal subunit protein bL32 (64 aa).

The interval 1-20 is disordered; sequence MALPKYKTSRANTHSRRANW.

The protein belongs to the bacterial ribosomal protein bL32 family.

The polypeptide is Large ribosomal subunit protein bL32 (Bifidobacterium adolescentis (strain ATCC 15703 / DSM 20083 / NCTC 11814 / E194a)).